We begin with the raw amino-acid sequence, 302 residues long: Glutaminase (302 aa).

Substrate-binding residues include S61, N111, E155, N162, Y186, Y238, and V256.

The protein belongs to the glutaminase family. In terms of assembly, homotetramer.

The enzyme catalyses L-glutamine + H2O = L-glutamate + NH4(+). The chain is Glutaminase from Pseudomonas syringae pv. tomato (strain ATCC BAA-871 / DC3000).